An 816-amino-acid chain; its full sequence is uncharacterized protein (816 aa).

2 disordered regions span residues 1 to 81 (MDVV…NSNN) and 391 to 411 (LGSN…NNDF). A compositionally biased stretch (low complexity) spans 28–44 (EVPPQRPRQQNRWKPWW). Over residues 64–81 (QGRSSPTTDFQDSVNSNN) the composition is skewed to polar residues. A phosphoserine mark is found at Ser76 and Ser79. The span at 391–400 (LGSNSSTNEN) shows a compositional bias: low complexity.

This is an uncharacterized protein from Saccharomyces cerevisiae (strain ATCC 204508 / S288c) (Baker's yeast).